An 83-amino-acid chain; its full sequence is Small ribosomal subunit protein bS16 (83 aa).

This sequence belongs to the bacterial ribosomal protein bS16 family.

The protein is Small ribosomal subunit protein bS16 of Shewanella frigidimarina (strain NCIMB 400).